The sequence spans 391 residues: Succinyl-diaminopimelate desuccinylase (391 aa).

Zn(2+) is bound at residue His78. Asp80 is a catalytic residue. Residue Asp111 coordinates Zn(2+). The active-site Proton acceptor is the Glu145. Residues Glu146, Glu174, and His360 each contribute to the Zn(2+) site.

It belongs to the peptidase M20A family. DapE subfamily. As to quaternary structure, homodimer. Zn(2+) serves as cofactor. It depends on Co(2+) as a cofactor.

It carries out the reaction N-succinyl-(2S,6S)-2,6-diaminopimelate + H2O = (2S,6S)-2,6-diaminopimelate + succinate. It functions in the pathway amino-acid biosynthesis; L-lysine biosynthesis via DAP pathway; LL-2,6-diaminopimelate from (S)-tetrahydrodipicolinate (succinylase route): step 3/3. In terms of biological role, catalyzes the hydrolysis of N-succinyl-L,L-diaminopimelic acid (SDAP), forming succinate and LL-2,6-diaminopimelate (DAP), an intermediate involved in the bacterial biosynthesis of lysine and meso-diaminopimelic acid, an essential component of bacterial cell walls. This Albidiferax ferrireducens (strain ATCC BAA-621 / DSM 15236 / T118) (Rhodoferax ferrireducens) protein is Succinyl-diaminopimelate desuccinylase.